A 348-amino-acid chain; its full sequence is 4-hydroxy-2-oxovalerate aldolase (348 aa).

The Pyruvate carboxyltransferase domain maps to 9 to 261 (ITVHDMTLRD…RTGVDVWKIQ (253 aa)). Position 17 to 18 (17 to 18 (RD)) interacts with substrate. Asp-18 is a Mn(2+) binding site. His-21 functions as the Proton acceptor in the catalytic mechanism. 2 residues coordinate substrate: Ser-171 and His-200. The Mn(2+) site is built by His-200 and His-202. Tyr-291 is a substrate binding site.

The protein belongs to the 4-hydroxy-2-oxovalerate aldolase family.

The enzyme catalyses (S)-4-hydroxy-2-oxopentanoate = acetaldehyde + pyruvate. This is 4-hydroxy-2-oxovalerate aldolase from Ralstonia pickettii (strain 12J).